Here is a 457-residue protein sequence, read N- to C-terminus: Variant surface glycoprotein 20 (457 aa).

The signal sequence occupies residues 1-20 (MFTQAVIALIGLVSIRTGKT). Residues 385–397 (RQTASGDDQSAEN) show a composition bias toward polar residues. The disordered stretch occupies residues 385 to 406 (RQTASGDDQSAENQCGGKKEDE). Asn-436 carries N-linked (GlcNAc...) asparagine glycosylation. Ser-440 carries the GPI-anchor amidated serine lipid modification. The propeptide at 441–457 (NSFVIKKAPLWLAFLLF) is removed in mature form.

It localises to the cell membrane. Functionally, VSG forms a coat on the surface of the parasite. The trypanosome evades the immune response of the host by expressing a series of antigenically distinct VSGs from an estimated 1000 VSG genes. This chain is Variant surface glycoprotein 20, found in Trypanosoma equiperdum.